Here is a 180-residue protein sequence, read N- to C-terminus: ATP-dependent protease subunit HslV (180 aa).

The active site involves T5. 3 residues coordinate Na(+): G165, C168, and T171.

It belongs to the peptidase T1B family. HslV subfamily. In terms of assembly, a double ring-shaped homohexamer of HslV is capped on each side by a ring-shaped HslU homohexamer. The assembly of the HslU/HslV complex is dependent on binding of ATP.

It is found in the cytoplasm. It carries out the reaction ATP-dependent cleavage of peptide bonds with broad specificity.. With respect to regulation, allosterically activated by HslU binding. Protease subunit of a proteasome-like degradation complex believed to be a general protein degrading machinery. In Helicobacter acinonychis (strain Sheeba), this protein is ATP-dependent protease subunit HslV.